We begin with the raw amino-acid sequence, 295 residues long: MDQKQIEEIVRSVMASMGQTAPAPSEAKCTTTNCAAPVTSESCALDLGSAEAKAWIGVENPHRADVLTELRRSTVARVCTGRAGPRPRTQALLRFLADHSRSKDTVLKEVPEEWVKAQGLLEVRSEISDKNLYLTRPDMGRRLCAEAVEALKAQCVANPDVQVVISDGLSTDAITVNYEEILPPLMAGLKQAGLKVGTPFFVRYGRVKIEDQIGEILGAKVVILLVGERPGLGQSESLSCYAVYSPRMATTVEADRTCISNIHQGGTPPVEAAAVIVDLAKRMLEQKASGINMTR.

Adenosylcob(III)alamin-binding residues include V207, E228, and C258.

The protein belongs to the EutC family. In terms of assembly, the basic unit is a heterodimer which dimerizes to form tetramers. The heterotetramers trimerize; 6 large subunits form a core ring with 6 small subunits projecting outwards. Adenosylcob(III)alamin serves as cofactor.

It localises to the bacterial microcompartment. The catalysed reaction is ethanolamine = acetaldehyde + NH4(+). It participates in amine and polyamine degradation; ethanolamine degradation. Functionally, catalyzes the deamination of various vicinal amino-alcohols to oxo compounds. Allows this organism to utilize ethanolamine as the sole source of nitrogen and carbon in the presence of external vitamin B12. This is Ethanolamine ammonia-lyase small subunit from Escherichia coli O81 (strain ED1a).